Consider the following 351-residue polypeptide: Photosystem II D2 protein (351 aa).

A helical membrane pass occupies residues 39–59; it reads TAYLAIGGWLTGTTFVTSWYT. Residue His-116 coordinates chlorophyll a. A helical transmembrane segment spans residues 123-139; sequence GFMLRQFELARLIGIRP. Residues Gln-128 and Asn-141 each coordinate pheophytin a. The helical transmembrane segment at 151 to 164 threads the bilayer; the sequence is VFVSVFLIYPLGQS. Residue His-196 participates in chlorophyll a binding. A helical transmembrane segment spans residues 206-226; it reads GALLSAIHGVTVENTLYQDGE. A plastoquinone-binding residues include His-213 and Phe-260. His-213 is a binding site for Fe cation. Position 267 (His-267) interacts with Fe cation. A helical membrane pass occupies residues 277-293; the sequence is GLWTSSIGIIGLALNLR.

Belongs to the reaction center PufL/M/PsbA/D family. As to quaternary structure, PSII is composed of 1 copy each of membrane proteins PsbA, PsbB, PsbC, PsbD, PsbE, PsbF, PsbH, PsbI, PsbJ, PsbK, PsbL, PsbM, PsbT, PsbX, PsbY, PsbZ, Psb30/Ycf12, peripheral proteins PsbO, CyanoQ (PsbQ), PsbU, PsbV and a large number of cofactors. It forms dimeric complexes. The D1/D2 heterodimer binds P680, chlorophylls that are the primary electron donor of PSII, and subsequent electron acceptors. It shares a non-heme iron and each subunit binds pheophytin, quinone, additional chlorophylls, carotenoids and lipids. There is also a Cl(-1) ion associated with D1 and D2, which is required for oxygen evolution. The PSII complex binds additional chlorophylls, carotenoids and specific lipids. serves as cofactor.

The protein localises to the host cellular thylakoid membrane. The catalysed reaction is 2 a plastoquinone + 4 hnu + 2 H2O = 2 a plastoquinol + O2. Its function is as follows. Photosystem II (PSII) is a light-driven water:plastoquinone oxidoreductase that uses light energy to abstract electrons from H(2)O, generating O(2) and a proton gradient subsequently used for ATP formation. It consists of a core antenna complex that captures photons, and an electron transfer chain that converts photonic excitation into a charge separation. The D1/D2 (PsbA/PsbD) reaction center heterodimer binds P680, the primary electron donor of PSII as well as several subsequent electron acceptors. D2 is needed for assembly of a stable PSII complex. This chain is Photosystem II D2 protein (psbD), found in Synechococcus phage S-RSM2.